The following is a 356-amino-acid chain: Histidinol-phosphate aminotransferase (356 aa).

Lys-214 carries the N6-(pyridoxal phosphate)lysine modification.

It belongs to the class-II pyridoxal-phosphate-dependent aminotransferase family. Histidinol-phosphate aminotransferase subfamily. As to quaternary structure, homodimer. It depends on pyridoxal 5'-phosphate as a cofactor.

It carries out the reaction L-histidinol phosphate + 2-oxoglutarate = 3-(imidazol-4-yl)-2-oxopropyl phosphate + L-glutamate. It participates in amino-acid biosynthesis; L-histidine biosynthesis; L-histidine from 5-phospho-alpha-D-ribose 1-diphosphate: step 7/9. The polypeptide is Histidinol-phosphate aminotransferase (Escherichia coli O7:K1 (strain IAI39 / ExPEC)).